The chain runs to 459 residues: GTPase Der (459 aa).

EngA-type G domains are found at residues Pro-4–Ala-169 and Ile-179–Arg-355. Residues Gly-10–Ser-17, Asp-57–Leu-61, Asn-120–Glu-123, Gly-185–Ser-192, Asp-232–Ile-236, and Asn-297–Asp-300 each bind GTP. The region spanning Lys-356 to Ser-441 is the KH-like domain.

The protein belongs to the TRAFAC class TrmE-Era-EngA-EngB-Septin-like GTPase superfamily. EngA (Der) GTPase family. In terms of assembly, associates with the 50S ribosomal subunit.

Its function is as follows. GTPase that plays an essential role in the late steps of ribosome biogenesis. This chain is GTPase Der, found in Synechococcus sp. (strain JA-3-3Ab) (Cyanobacteria bacterium Yellowstone A-Prime).